A 189-amino-acid chain; its full sequence is Glucose-6-phosphate isomerase (189 aa).

Residues histidine 88, histidine 90, glutamate 97, and histidine 136 each contribute to the Fe cation site.

It belongs to the archaeal-type GPI family. In terms of assembly, homodimer.

The protein localises to the cytoplasm. The enzyme catalyses alpha-D-glucose 6-phosphate = beta-D-fructose 6-phosphate. It participates in carbohydrate degradation; glycolysis; D-glyceraldehyde 3-phosphate and glycerone phosphate from D-glucose: step 2/4. The chain is Glucose-6-phosphate isomerase from Thermococcus onnurineus (strain NA1).